The following is a 188-amino-acid chain: MTEYKLVVVGAGGVGKSALTIQLIQNHFVDEYDPTIEDSYRKQVVIDGETCLLDILDTAGQEEYSAMRDQYMRTGEGFLCVFAINNTKSFEDIHHYREQIKRVKDSEDVPMVLVGNKCDLPSRSVDTKQAQDLARSYGIPFIETSAKTRQGVDDAFYTLVREIRKHKEKMSKEGKKKKKKSKTKCVLM.

Residues Gly-10–Ala-18, Val-29–Thr-35, Ala-59–Gly-60, and Asn-116–Asp-119 contribute to the GTP site. The Effector region motif lies at Tyr-32–Tyr-40. The disordered stretch occupies residues Lys-167 to Met-188. The residue at position 185 (Cys-185) is a Cysteine methyl ester. Cys-185 carries S-farnesyl cysteine lipidation. Positions Val-186–Met-188 are cleaved as a propeptide — removed in mature form.

Belongs to the small GTPase superfamily. Ras family.

Its subcellular location is the cell membrane. The protein resides in the cytoplasm. It catalyses the reaction GTP + H2O = GDP + phosphate + H(+). With respect to regulation, alternates between an inactive form bound to GDP and an active form bound to GTP. Activated by a guanine nucleotide-exchange factor (GEF) and inactivated by a GTPase-activating protein (GAP). In terms of biological role, ras proteins bind GDP/GTP and possess intrinsic GTPase activity. Plays an important role in the regulation of cell proliferation. May play a role in promoting oncogenic events by inducing transcriptional silencing of tumor suppressor genes (TSGs). This chain is GTPase KRas (kras), found in Cyprinus carpio (Common carp).